The primary structure comprises 770 residues: Conserved oligomeric Golgi complex subunit 7 (770 aa).

The protein belongs to the COG7 family. Component of the conserved oligomeric Golgi complex which is composed of eight different subunits and is required for normal Golgi morphology and localization.

The protein localises to the golgi apparatus membrane. Its function is as follows. Required for normal Golgi function. This Homo sapiens (Human) protein is Conserved oligomeric Golgi complex subunit 7 (COG7).